A 538-amino-acid chain; its full sequence is MGKKSKAQSDNVSQPGKTDVTLPFLGGKAAIDPTVASLFEKSAGPVKAPSVQPIITQRKENGPEDDVEKEEDDEEISELEEDLQSEDEDMQDVSEVAGDAERTLAVDTQAPSSKKRKRAPAEDLEETYMRRIAKEEQKEQEKRRAEKAKRQKVEEGGKDSDPVSDKSKDGRDESSEEEDEITVPRHETQSGDPESKELEKSNRTVFLGNVSSQAIKSKSAKKTLLKHLASFLSTLPESTGPHKVESIRFRSVAFASGGKVPKRAAFARREILDDTTPSTNAYVVYSTVQAARKAPAALNGTVVLDRHLRVDSVAHPSQIDHKRCVFVGNLDFVDNETDPEEDDKKKKKKKSGPADVEEGLWRTFNAHTKGSKERASTRGNVESVRVVRDRTTRVGKGFAYVQFYDQVCVEEALLLDGKKFPPMLPRKLRVTRAKKLPKKRDGPETGSHGKALGEGFSTLQGRAGKLFGRAGAAKMKAEGRKSISGNSVVFEGNRASEGSSRIKIKTKSRGSKGKPKNRSAKRAAAYQAAGGRKGKMAK.

Disordered regions lie at residues 1–25 (MGKK…LPFL), 41–203 (KSAG…KSNR), 336–378 (ETDP…ASTR), 433–455 (AKKL…LGEG), and 476–538 (KAEG…KMAK). Positions 63-92 (PEDDVEKEEDDEEISELEEDLQSEDEDMQD) are enriched in acidic residues. Residues 64–156 (EDDVEKEEDD…KAKRQKVEEG (93 aa)) adopt a coiled-coil conformation. 3 stretches are compositionally biased toward basic and acidic residues: residues 127 to 144 (TYMR…EKRR), 151 to 173 (QKVE…GRDE), and 182 to 202 (TVPR…EKSN). RRM domains are found at residues 203 to 315 (RTVF…SVAH) and 323 to 435 (RCVF…RAKK). Positions 502–521 (IKIKTKSRGSKGKPKNRSAK) are enriched in basic residues.

It belongs to the RRM RBM34 family.

The protein resides in the nucleus. It localises to the nucleolus. In terms of biological role, involved in pre-25S rRNA processing. The sequence is that of Nucleolar protein 12 (nop12) from Aspergillus fumigatus (strain ATCC MYA-4609 / CBS 101355 / FGSC A1100 / Af293) (Neosartorya fumigata).